The chain runs to 773 residues: Protein FAM149A (773 aa).

Low complexity-rich tracts occupy residues 18 to 37 (TSTAPPAGPSSRPSGGAAAA) and 54 to 90 (LLRALAPDSPSASRRSPAPLLSSPYSRGSAASRAAGA). 4 disordered regions span residues 18–155 (TSTA…RELG), 173–210 (DIGEEGASDGDSGDGEARGLSEGRRRHGFTVRSKDSLP), 232–264 (FSSSGSHTPTGAHTSWSGSATQSSTTGSSTERG), and 568–613 (TQNE…PWRL). Residues 174–186 (IGEEGASDGDSGD) show a composition bias toward acidic residues. Low complexity predominate over residues 245 to 264 (TSWSGSATQSSTTGSSTERG).

The protein belongs to the FAM149 family.

The chain is Protein FAM149A (FAM149A) from Homo sapiens (Human).